Reading from the N-terminus, the 257-residue chain is 3-deoxy-manno-octulosonate cytidylyltransferase (257 aa).

It belongs to the KdsB family.

Its subcellular location is the cytoplasm. The catalysed reaction is 3-deoxy-alpha-D-manno-oct-2-ulosonate + CTP = CMP-3-deoxy-beta-D-manno-octulosonate + diphosphate. It participates in nucleotide-sugar biosynthesis; CMP-3-deoxy-D-manno-octulosonate biosynthesis; CMP-3-deoxy-D-manno-octulosonate from 3-deoxy-D-manno-octulosonate and CTP: step 1/1. It functions in the pathway bacterial outer membrane biogenesis; lipopolysaccharide biosynthesis. Activates KDO (a required 8-carbon sugar) for incorporation into bacterial lipopolysaccharide in Gram-negative bacteria. The chain is 3-deoxy-manno-octulosonate cytidylyltransferase from Xylella fastidiosa (strain 9a5c).